Here is a 60-residue protein sequence, read N- to C-terminus: Ixodegrin-like peptide (60 aa).

The first 19 residues, 1-19, serve as a signal peptide directing secretion; sequence MNAVFIAALLILGTSTFDA. The Cell attachment site motif lies at 49 to 51; that stretch reads RGD.

Belongs to the ixodegrin family. Post-translationally, contains 3 disulfide bonds. Expressed in salivary glands.

It is found in the secreted. Tick salivary platelet aggregation inhibitor that plays an important part in the anti-hemostatic strategy of ticks. Inhibits platelet aggregation induced by ADP, thrombin and thromboxane A2 (TXA2). Blocks platelet adhesion to soluble collagen (most probably through the binding to alpha-2/beta-1 integrin (ITGA2/ITGB1)) and binds to purified glycoprotein IIb/IIIa (ITGA2B/ITGB3) in a dose-dependent manner. In vivo, reduces thrombus weight effectively in a rat arteriovenous shunt model and inhibits thrombosis in a carrageenan-induced mouse tail thrombosis model. The protein is Ixodegrin-like peptide of Ixodes scapularis (Black-legged tick).